The primary structure comprises 54 residues: Ovomucoid (54 aa).

Residues 4–54 (VDCSEYPKPACTLEYRPLCGSDSKTYGNKCNFCNAVVESNGTLTLSHFGKC) form the Kazal-like domain. 3 cysteine pairs are disulfide-bonded: cysteine 6–cysteine 36, cysteine 14–cysteine 33, and cysteine 22–cysteine 54. Asparagine 43 carries an N-linked (GlcNAc...) asparagine glycan.

Its subcellular location is the secreted. In Alectoris chukar (Chukar partridge), this protein is Ovomucoid.